The primary structure comprises 155 residues: Small ribosomal subunit protein uS7 (155 aa).

The protein belongs to the universal ribosomal protein uS7 family. In terms of assembly, part of the 30S ribosomal subunit. Contacts proteins S9 and S11.

Functionally, one of the primary rRNA binding proteins, it binds directly to 16S rRNA where it nucleates assembly of the head domain of the 30S subunit. Is located at the subunit interface close to the decoding center, probably blocks exit of the E-site tRNA. The chain is Small ribosomal subunit protein uS7 from Thermotoga maritima (strain ATCC 43589 / DSM 3109 / JCM 10099 / NBRC 100826 / MSB8).